The sequence spans 132 residues: Small ribosomal subunit protein uS8 (132 aa).

This sequence belongs to the universal ribosomal protein uS8 family. Part of the 30S ribosomal subunit. Contacts proteins S5 and S12.

One of the primary rRNA binding proteins, it binds directly to 16S rRNA central domain where it helps coordinate assembly of the platform of the 30S subunit. The chain is Small ribosomal subunit protein uS8 from Lacticaseibacillus casei (strain BL23) (Lactobacillus casei).